The following is a 417-amino-acid chain: Mitochondrial tRNA-specific 2-thiouridylase 1 (417 aa).

Residues 32 to 39 (AMSSGVDS) and M58 each bind ATP. Residues 122–124 (NPD) are interaction with target base in tRNA. Residue C127 is the Nucleophile of the active site. C127 and C229 are joined by a disulfide. Residue G154 coordinates ATP. Residues 179-181 (KDQ) form an interaction with tRNA region. C229 acts as the Cysteine persulfide intermediate in catalysis. The interaction with tRNA stretch occupies residues 354–355 (RS).

Belongs to the MnmA/TRMU family.

Its subcellular location is the mitochondrion. The enzyme catalyses 5-taurinomethyluridine(34) in tRNA + S-sulfanyl-L-cysteinyl-[protein] + AH2 + ATP = 5-taurinomethyl-2-thiouridine(34) in tRNA + L-cysteinyl-[protein] + A + AMP + diphosphate + H(+). In terms of biological role, catalyzes the 2-thiolation of uridine at the wobble position (U34) of mitochondrial tRNA(Lys), tRNA(Glu) and tRNA(Gln). Required for the formation of 5-taurinomethyl-2-thiouridine (tm5s2U) of mitochondrial tRNA(Lys), tRNA(Glu), and tRNA(Gln) at the wobble position. ATP is required to activate the C2 atom of the wobble base. In Saccharomyces cerevisiae (strain ATCC 204508 / S288c) (Baker's yeast), this protein is Mitochondrial tRNA-specific 2-thiouridylase 1 (SLM3).